A 925-amino-acid polypeptide reads, in one-letter code: Probable glycoprotein hormone G-protein coupled receptor (925 aa).

Positions 1-27 (MEDRGICPRVLQVLFLVVLILISPVYA) are cleaved as a signal peptide. The Extracellular portion of the chain corresponds to 28–529 (AKNDACTKCS…EDIMGYVWLT (502 aa)). N61 carries an N-linked (GlcNAc...) asparagine glycan. LRR repeat units follow at residues 85–106 (KLKY…RVKN), 110–131 (SLIT…AFDD), 134–155 (QLTQ…NKTS), 156–180 (SVTK…GNLP), 181–202 (SLEN…IFRQ), 203–224 (NTRL…NEDA), 230–250 (SLKT…RGLK), and 251–273 (NLHF…DSIR). Residue N152 is glycosylated (N-linked (GlcNAc...) asparagine). A glycan (N-linked (GlcNAc...) asparagine) is linked at N212. The disordered stretch occupies residues 299-493 (TMQKPSTEEN…PTLIPHSNHT (195 aa)). Polar residues predominate over residues 301–318 (QKPSTEENNGQTTASSPT). The stretch at 333–349 (STQPHTTSGFGGGGFPG) is one 1; truncated repeat. A 5 X approximate tandem repeats region spans residues 333–461 (STQPHTTSGF…PGGGGFPGGG (129 aa)). Positions 341–362 (GFGGGGFPGGGGGFPGGGGFPA) are enriched in gly residues. Repeat copies occupy residues 350 to 384 (GGGG…GFPG), 385 to 419 (GGGG…GFPG), and 420 to 453 (GGGG…GFPG). Residues 365 to 375 (SKTSTQPHTTS) are compositionally biased toward polar residues. Residues 376 to 397 (GFGGGGFPGGGGGFPGGGGFPA) are compositionally biased toward gly residues. A compositionally biased stretch (polar residues) spans 400-410 (SKTSTQPHTTS). Residues 411 to 432 (GFGGGGFPGGGGGFPGGGGFPG) show a composition bias toward gly residues. The span at 434-445 (SNTSTQPHTTSN) shows a compositional bias: polar residues. N-linked (GlcNAc...) asparagine glycosylation is present at N435. Residues 446-462 (SGGGGFPGGGGFPGGGT) are compositionally biased toward gly residues. Residues 454-461 (GGGFPGGG) form a 5; truncated repeat. A compositionally biased stretch (polar residues) spans 476 to 493 (VHQSTADPPTLIPHSNHT). N495 is a glycosylation site (N-linked (GlcNAc...) asparagine). A helical transmembrane segment spans residues 530 to 551 (VVSFMVGAVALVANLVVALVLL). Over 552–561 (TSQRRLNVTR) the chain is Cytoplasmic. A helical transmembrane segment spans residues 562–584 (FLMCNLAFADFILGLYIFILTSV). Topologically, residues 585 to 606 (SAVTRGDYHNYVQQWQNGAGCK) are extracellular. The chain crosses the membrane as a helical span at residues 607–628 (ILGFLAVFSSELSLFTLVMMTI). Residues 629–651 (ERFYAIVHAMHMNARLSFRKTVR) are Cytoplasmic-facing. Residues 652–673 (FMIGGWIFALVMAVVPLTGVSG) form a helical membrane-spanning segment. Residues 674–691 (YSKVAICLPFDVSDATST) are Extracellular-facing. Residues 692-712 (AYVAFLLLVNGASFISVMYLY) form a helical membrane-spanning segment. Over 713–739 (SRMLYVVVSGGDMEGAPKRNDSKVAKR) the chain is Cytoplasmic. Residues 740–763 (MAILVFTDMLCWAPIAFFGLLAAF) form a helical membrane-spanning segment. Residues 764-774 (GQTLLTVTQSK) lie on the Extracellular side of the membrane. The helical transmembrane segment at 775-795 (ILLVFFFPINSICNPFLYAFF) threads the bilayer. The Cytoplasmic portion of the chain corresponds to 796 to 925 (TKAFKRELFT…QKQKILQSPS (130 aa)). The tract at residues 904 to 925 (VTKSSSPPHLKLQKQKILQSPS) is disordered.

It belongs to the G-protein coupled receptor 1 family. FSH/LSH/TSH subfamily.

The protein localises to the cell membrane. In terms of biological role, probable receptor for a glycoprotein hormone. The protein is Probable glycoprotein hormone G-protein coupled receptor of Anthopleura elegantissima (Green aggregating anemone).